A 398-amino-acid polypeptide reads, in one-letter code: Phosphoglycerate kinase (398 aa).

Substrate contacts are provided by residues 20 to 22, R35, 58 to 61, R118, and R155; these read DLN and HLGR. ATP is bound by residues K206, G295, E326, and 354-357; that span reads GGDS.

The protein belongs to the phosphoglycerate kinase family. In terms of assembly, monomer.

Its subcellular location is the cytoplasm. It catalyses the reaction (2R)-3-phosphoglycerate + ATP = (2R)-3-phospho-glyceroyl phosphate + ADP. Its pathway is carbohydrate degradation; glycolysis; pyruvate from D-glyceraldehyde 3-phosphate: step 2/5. The chain is Phosphoglycerate kinase from Onion yellows phytoplasma (strain OY-M).